The chain runs to 94 residues: Putative regulatory protein LEPBI_I0950 (94 aa).

It belongs to the RemA family.

This chain is Putative regulatory protein LEPBI_I0950, found in Leptospira biflexa serovar Patoc (strain Patoc 1 / ATCC 23582 / Paris).